The following is a 244-amino-acid chain: Cell division protein ZapD (244 aa).

This sequence belongs to the ZapD family. Interacts with FtsZ.

It is found in the cytoplasm. In terms of biological role, cell division factor that enhances FtsZ-ring assembly. Directly interacts with FtsZ and promotes bundling of FtsZ protofilaments, with a reduction in FtsZ GTPase activity. This Shewanella baltica (strain OS185) protein is Cell division protein ZapD.